We begin with the raw amino-acid sequence, 266 residues long: Tryptophan synthase alpha chain (266 aa).

Active-site proton acceptor residues include E51 and D62.

This sequence belongs to the TrpA family. Tetramer of two alpha and two beta chains.

It carries out the reaction (1S,2R)-1-C-(indol-3-yl)glycerol 3-phosphate + L-serine = D-glyceraldehyde 3-phosphate + L-tryptophan + H2O. It functions in the pathway amino-acid biosynthesis; L-tryptophan biosynthesis; L-tryptophan from chorismate: step 5/5. In terms of biological role, the alpha subunit is responsible for the aldol cleavage of indoleglycerol phosphate to indole and glyceraldehyde 3-phosphate. This is Tryptophan synthase alpha chain from Prochlorococcus marinus (strain NATL1A).